The chain runs to 536 residues: Zinc finger protein 623 (536 aa).

A disordered region spans residues 57 to 77; sequence GELLGNPEGQSLGSSPSQDRG. The segment covering 64–74 has biased composition (polar residues); sequence EGQSLGSSPSQ. 13 consecutive C2H2-type zinc fingers follow at residues 123-145, 151-173, 179-201, 207-229, 235-257, 263-285, 291-313, 319-341, 347-369, 375-397, 403-425, 431-453, and 459-481; these read NPCD…RISH, YTCD…QRIH, YVCN…QRVH, FKCA…QRVH, FECK…QRIH, YECN…YQIH, YECK…QRIH, FECN…QRIH, YVCN…QRIH, YECN…QKIH, YECK…QKIH, FECK…QIIH, and YVCS…QKIH. Residue Lys-445 forms a Glycyl lysine isopeptide (Lys-Gly) (interchain with G-Cter in SUMO2) linkage. Residues 513–536 are disordered; the sequence is LSLSKAPIHLGERSVDKGEHTGNL. Over residues 522-536 the composition is skewed to basic and acidic residues; the sequence is LGERSVDKGEHTGNL.

This sequence belongs to the krueppel C2H2-type zinc-finger protein family.

Its subcellular location is the nucleus. In terms of biological role, may be involved in transcriptional regulation. The polypeptide is Zinc finger protein 623 (ZNF623) (Homo sapiens (Human)).